A 159-amino-acid chain; its full sequence is 2-C-methyl-D-erythritol 2,4-cyclodiphosphate synthase (159 aa).

A divalent metal cation contacts are provided by Asp-9 and His-11. Residues 9-11 and 35-36 each bind 4-CDP-2-C-methyl-D-erythritol 2-phosphate; these read DVH and HS. Position 43 (His-43) interacts with a divalent metal cation. Residues 57 to 59, 62 to 66, 133 to 136, Phe-140, and Arg-143 each bind 4-CDP-2-C-methyl-D-erythritol 2-phosphate; these read DLG, FPDTD, and TTTE.

The protein belongs to the IspF family. Homotrimer. Requires a divalent metal cation as cofactor.

The catalysed reaction is 4-CDP-2-C-methyl-D-erythritol 2-phosphate = 2-C-methyl-D-erythritol 2,4-cyclic diphosphate + CMP. The protein operates within isoprenoid biosynthesis; isopentenyl diphosphate biosynthesis via DXP pathway; isopentenyl diphosphate from 1-deoxy-D-xylulose 5-phosphate: step 4/6. Functionally, involved in the biosynthesis of isopentenyl diphosphate (IPP) and dimethylallyl diphosphate (DMAPP), two major building blocks of isoprenoid compounds. Catalyzes the conversion of 4-diphosphocytidyl-2-C-methyl-D-erythritol 2-phosphate (CDP-ME2P) to 2-C-methyl-D-erythritol 2,4-cyclodiphosphate (ME-CPP) with a corresponding release of cytidine 5-monophosphate (CMP). The chain is 2-C-methyl-D-erythritol 2,4-cyclodiphosphate synthase from Shouchella clausii (strain KSM-K16) (Alkalihalobacillus clausii).